A 485-amino-acid polypeptide reads, in one-letter code: Cysteine--tRNA ligase (485 aa).

Cys27 contacts Zn(2+). The short motif at 29 to 39 (ITAYDLCHLGH) is the 'HIGH' region element. Residues Cys208, His233, and Glu237 each contribute to the Zn(2+) site. The 'KMSKS' region motif lies at 265-269 (KMSKS). Lys268 lines the ATP pocket.

Belongs to the class-I aminoacyl-tRNA synthetase family. In terms of assembly, monomer. It depends on Zn(2+) as a cofactor.

Its subcellular location is the cytoplasm. It catalyses the reaction tRNA(Cys) + L-cysteine + ATP = L-cysteinyl-tRNA(Cys) + AMP + diphosphate. The chain is Cysteine--tRNA ligase from Oleidesulfovibrio alaskensis (strain ATCC BAA-1058 / DSM 17464 / G20) (Desulfovibrio alaskensis).